We begin with the raw amino-acid sequence, 186 residues long: 19 kDa globulin (186 aa).

The N-terminal stretch at 1-22 (MASKVVFFAAALMAAMVAISGA) is a signal peptide. The segment at 108–155 (PLEQGWSSSSSEYYGGEGSSSEQGYYGEGSSEEGYYGEQQQQPGMTRV) is disordered. Positions 110 to 149 (EQGWSSSSSEYYGGEGSSSEQGYYGEGSSEEGYYGEQQQQ) are enriched in low complexity.

It belongs to the 2S seed storage albumins family.

The protein resides in the secreted. In terms of biological role, seed storage protein. The sequence is that of 19 kDa globulin from Oryza sativa subsp. japonica (Rice).